The chain runs to 682 residues: Tail-specific protease (682 aa).

The N-terminal stretch at 1-22 (MNMFFRLTALAGLLAIAGQTFA) is a signal peptide. The PDZ domain maps to 238–322 (NTEMSLSLEG…SKVRLEILPA (85 aa)). Active-site charge relay system residues include S452, D463, and K477. The span at 635–650 (GKPELKKLDDLPKDYQ) shows a compositional bias: basic and acidic residues. Residues 635-654 (GKPELKKLDDLPKDYQEPDP) are disordered.

This sequence belongs to the peptidase S41A family.

It is found in the cell inner membrane. It catalyses the reaction The enzyme shows specific recognition of a C-terminal tripeptide, Xaa-Yaa-Zaa, in which Xaa is preferably Ala or Leu, Yaa is preferably Ala or Tyr, and Zaa is preferably Ala, but then cleaves at a variable distance from the C-terminus. A typical cleavage is -Ala-Ala-|-Arg-Ala-Ala-Lys-Glu-Asn-Tyr-Ala-Leu-Ala-Ala.. Involved in the cleavage of a C-terminal peptide of 11 residues from the precursor form of penicillin-binding protein 3 (PBP3). May be involved in protection of the bacterium from thermal and osmotic stresses. The sequence is that of Tail-specific protease (prc) from Escherichia coli (strain K12).